Reading from the N-terminus, the 558-residue chain is Methionine--tRNA ligase 1 (558 aa).

Residues 10-20 (PYINGIKHLGN) carry the 'HIGH' region motif. Residues Cys-142, Cys-145, Cys-155, and Cys-158 each contribute to the Zn(2+) site. A 'KMSKS' region motif is present at residues 332–336 (KFSTS). Thr-335 contributes to the ATP binding site.

Belongs to the class-I aminoacyl-tRNA synthetase family. MetG type 1 subfamily. Monomer. It depends on Zn(2+) as a cofactor.

The protein resides in the cytoplasm. The catalysed reaction is tRNA(Met) + L-methionine + ATP = L-methionyl-tRNA(Met) + AMP + diphosphate. Functionally, is required not only for elongation of protein synthesis but also for the initiation of all mRNA translation through initiator tRNA(fMet) aminoacylation. The protein is Methionine--tRNA ligase 1 of Acaryochloris marina (strain MBIC 11017).